Here is a 563-residue protein sequence, read N- to C-terminus: Inositol-3-phosphate synthase 1-B (563 aa).

It belongs to the myo-inositol 1-phosphate synthase family. NAD(+) is required as a cofactor.

It is found in the cytoplasm. It catalyses the reaction D-glucose 6-phosphate = 1D-myo-inositol 3-phosphate. Its pathway is polyol metabolism; myo-inositol biosynthesis; myo-inositol from D-glucose 6-phosphate: step 1/2. In terms of biological role, key enzyme in myo-inositol biosynthesis pathway that catalyzes the conversion of glucose 6-phosphate to 1-myo-inositol 1-phosphate in a NAD-dependent manner. Rate-limiting enzyme in the synthesis of all inositol-containing compounds. This is Inositol-3-phosphate synthase 1-B (isyna1-b) from Xenopus laevis (African clawed frog).